The primary structure comprises 493 residues: Glutamyl-tRNA(Gln) amidotransferase subunit A (493 aa).

Catalysis depends on charge relay system residues lysine 78 and serine 158. The active-site Acyl-ester intermediate is serine 182.

Belongs to the amidase family. GatA subfamily. In terms of assembly, heterotrimer of A, B and C subunits.

It catalyses the reaction L-glutamyl-tRNA(Gln) + L-glutamine + ATP + H2O = L-glutaminyl-tRNA(Gln) + L-glutamate + ADP + phosphate + H(+). Allows the formation of correctly charged Gln-tRNA(Gln) through the transamidation of misacylated Glu-tRNA(Gln) in organisms which lack glutaminyl-tRNA synthetase. The reaction takes place in the presence of glutamine and ATP through an activated gamma-phospho-Glu-tRNA(Gln). The polypeptide is Glutamyl-tRNA(Gln) amidotransferase subunit A (Methylocella silvestris (strain DSM 15510 / CIP 108128 / LMG 27833 / NCIMB 13906 / BL2)).